Here is a 119-residue protein sequence, read N- to C-terminus: Protein phosphatase EYA3 (119 aa).

Belongs to the HAD-like hydrolase superfamily. EYA family. Mg(2+) is required as a cofactor.

The protein resides in the cytoplasm. It is found in the nucleus. The enzyme catalyses O-phospho-L-tyrosyl-[protein] + H2O = L-tyrosyl-[protein] + phosphate. In terms of biological role, tyrosine phosphatase that specifically dephosphorylates 'Tyr-142' of histone H2AX (H2AXY142ph). 'Tyr-142' phosphorylation of histone H2AX plays a central role in DNA repair and acts as a mark that distinguishes between apoptotic and repair responses to genotoxic stress. Promotes efficient DNA repair by dephosphorylating H2AX, promoting the recruitment of DNA repair complexes containing MDC1. Its function as histone phosphatase probably explains its role in transcription regulation during organogenesis. May be involved in development of the eye. The polypeptide is Protein phosphatase EYA3 (EYA3) (Gallus gallus (Chicken)).